Reading from the N-terminus, the 74-residue chain is CLAVATA3/ESR (CLE)-related protein 19 (74 aa).

Positions 1–24 are cleaved as a signal peptide; sequence MKIKGLMILASSLLILAFIHQSES. 2 N-linked (GlcNAc...) asparagine glycosylation sites follow: N34 and N54. P65 and P68 each carry hydroxyproline. P68 carries an O-linked (Ara...) hydroxyproline glycan.

The protein belongs to the CLV3/ESR signal peptide family. The O-glycosylation (arabinosylation) of the hydroxyproline Pro-68 enhances binding affinity of the CLE19p peptide for its receptor. As to expression, mostly expressed in heart-shape embryos, pollen and young flower buds, and, to a lower extent, in inflorescence, leaves and roots.

Its subcellular location is the secreted. It is found in the extracellular space. Extracellular signal peptide that regulates cell fate. Represses root apical meristem maintenance. The polypeptide is CLAVATA3/ESR (CLE)-related protein 19 (Arabidopsis thaliana (Mouse-ear cress)).